Reading from the N-terminus, the 226-residue chain is Cold-regulated 413 inner membrane protein 2, chloroplastic (226 aa).

The transit peptide at 1-76 (MASLCLSSSR…RKRGSSVVCY (76 aa)) directs the protein to the chloroplast. Over 77-79 (ATP) the chain is Stromal. The chain crosses the membrane as a helical span at residues 80–100 (MLSVHNLQWISTISCVALMFA). Topologically, residues 101-103 (RGT) are chloroplast intermembrane. A helical membrane pass occupies residues 104 to 124 (GIHKSFVVPLFALQAPMGIVS). At 125–129 (WMKGE) the chain is on the stromal side. A helical membrane pass occupies residues 130–150 (YGIWAAFLALLTRLFFSFPVE). The Chloroplast intermembrane segment spans residues 151 to 152 (LE). The chain crosses the membrane as a helical span at residues 153 to 173 (LPFIALLLVIVAPYQVMSIRG). Over 174–176 (KQE) the chain is Stromal. The chain crosses the membrane as a helical span at residues 177–197 (GAILSLAISCFLAFQHFSRAG). Over 198-205 (TLQKAFDQ) the chain is Chloroplast intermembrane. Residues 206-226 (NSVLATVAIIGVTVVSFLFLI) traverse the membrane as a helical segment.

It belongs to the Cold-regulated 413 protein family.

The protein localises to the plastid. The protein resides in the chloroplast inner membrane. The sequence is that of Cold-regulated 413 inner membrane protein 2, chloroplastic (COR413IM2) from Arabidopsis thaliana (Mouse-ear cress).